The following is a 147-amino-acid chain: Hemoglobin subunit beta (147 aa).

At Val2 the chain carries N-acetylvaline. The region spanning 3–147 is the Globin domain; sequence HLTAEEKSAV…VANALAHKYH (145 aa). Residue Thr13 is modified to Phosphothreonine. At Ser45 the chain carries Phosphoserine. Residue Lys60 is modified to N6-acetyllysine. His64 contributes to the heme b binding site. Lys83 is subject to N6-acetyllysine. Residue His93 coordinates heme b. Cys94 carries the S-nitrosocysteine modification. Lys145 is modified (N6-acetyllysine).

It belongs to the globin family. In terms of assembly, heterotetramer of two alpha chains and two beta chains. Red blood cells.

Its function is as follows. Involved in oxygen transport from the lung to the various peripheral tissues. This Sapajus apella (Brown-capped capuchin) protein is Hemoglobin subunit beta (HBB).